A 143-amino-acid polypeptide reads, in one-letter code: Granulocyte-macrophage colony-stimulating factor (143 aa).

The signal sequence occupies residues 1-17 (MWLQNLLLLGTVVCSFS). An O-linked (GalNAc...) threonine glycan is attached at Thr27. 2 N-linked (GlcNAc...) asparagine glycosylation sites follow: Asn44 and Asn54. 2 cysteine pairs are disulfide-bonded: Cys70-Cys112 and Cys104-Cys137.

This sequence belongs to the GM-CSF family. In terms of assembly, monomer. The signaling GM-CSF receptor complex is a dodecamer of two head-to-head hexamers of two alpha, two beta, and two ligand subunits.

The protein resides in the secreted. Cytokine that stimulates the growth and differentiation of hematopoietic precursor cells from various lineages, including granulocytes, macrophages, eosinophils and erythrocytes. This chain is Granulocyte-macrophage colony-stimulating factor (CSF2), found in Bos taurus (Bovine).